Here is an 86-residue protein sequence, read N- to C-terminus: MSKQPVSNVRAIQANINIPMGAFRPGAGQPPRRKECTPEIEEGAPPTSDEEKKPIPGAKKLPGPAVNLSEIQNIKSELKYVPKAEQ.

Residues 20–64 form a disordered region; that stretch reads MGAFRPGAGQPPRRKECTPEIEEGAPPTSDEEKKPIPGAKKLPGP.

It belongs to the SMPX family.

Plays a role in the regulatory network through which muscle cells coordinate their structural and functional states during growth, adaptation, and repair. This Bos taurus (Bovine) protein is Small muscular protein (SMPX).